The chain runs to 199 residues: Ribonuclease HII (199 aa).

In terms of domain architecture, RNase H type-2 spans 12-199 (DLLAGTDEAG…FGPVKKILEG (188 aa)). Asp18, Glu19, and Asp110 together coordinate a divalent metal cation.

Belongs to the RNase HII family. The cofactor is Mn(2+). Mg(2+) is required as a cofactor.

It localises to the cytoplasm. The enzyme catalyses Endonucleolytic cleavage to 5'-phosphomonoester.. Its function is as follows. Endonuclease that specifically degrades the RNA of RNA-DNA hybrids. The protein is Ribonuclease HII of Marinomonas sp. (strain MWYL1).